The sequence spans 287 residues: Glutamate racemase (287 aa).

Substrate-binding positions include 32-33 and 64-65; these read DS and YG. The Proton donor/acceptor role is filled by C96. Residue 97-98 coordinates substrate; the sequence is NT. C208 (proton donor/acceptor) is an active-site residue. A substrate-binding site is contributed by 209 to 210; the sequence is TH.

The protein belongs to the aspartate/glutamate racemases family.

It carries out the reaction L-glutamate = D-glutamate. It functions in the pathway cell wall biogenesis; peptidoglycan biosynthesis. Its function is as follows. Provides the (R)-glutamate required for cell wall biosynthesis. The chain is Glutamate racemase from Serratia proteamaculans (strain 568).